The following is a 161-amino-acid chain: MRVRLSSALRPRWRYVTFKVWSERVEALDFGGMKDLVVRALLSVLGPTGTGRIGPWLVRSYRDLNAGILRVRRGQEEEARAALSLYRRDPKLGRVFIEVLGTSGTIKGAERYLSRIPKWDRERVGNREFVLYENGEVDVVEDGRIVAFASFECPLPEENRG.

Belongs to the eukaryotic/archaeal RNase P protein component 2 family. As to quaternary structure, consists of a catalytic RNA component and at least 4-5 protein subunits.

It localises to the cytoplasm. The enzyme catalyses Endonucleolytic cleavage of RNA, removing 5'-extranucleotides from tRNA precursor.. Functionally, part of ribonuclease P, a protein complex that generates mature tRNA molecules by cleaving their 5'-ends. The protein is Ribonuclease P protein component 2 of Methanopyrus kandleri (strain AV19 / DSM 6324 / JCM 9639 / NBRC 100938).